Reading from the N-terminus, the 223-residue chain is MADKSDLNALSGRFRGFYPVVIDVETAGFNAKTDALLEVAAVTLKMDQDGWLQPDETLHFHVEPFEGAILEPAALAFNGIDPTNPLRGAVSEYDALHEIFKVVRKGIKDRGCNRAIIVAHNATFDHSFMAAAAERCSLKRNPFHPFATFDTAALSGLVLGQTVLAKACITAGIAFDSSQAHSALYDTNQTALLFCELVNRWKRLGGWPLALEESSLEDTSAED.

In terms of domain architecture, Exonuclease spans 20 to 194 (VVIDVETAGF…YDTNQTALLF (175 aa)). Mg(2+)-binding residues include Asp23, Glu25, His181, and Asp186. The active-site Proton donor/acceptor is His181.

The protein belongs to the RNase T family. Homodimer. Mg(2+) is required as a cofactor.

Its function is as follows. Trims short 3' overhangs of a variety of RNA species, leaving a one or two nucleotide 3' overhang. Responsible for the end-turnover of tRNA: specifically removes the terminal AMP residue from uncharged tRNA (tRNA-C-C-A). Also appears to be involved in tRNA biosynthesis. This chain is Ribonuclease T, found in Pectobacterium atrosepticum (strain SCRI 1043 / ATCC BAA-672) (Erwinia carotovora subsp. atroseptica).